A 484-amino-acid chain; its full sequence is HTH-type transcriptional regulator TauR (484 aa).

In terms of domain architecture, HTH gntR-type spans 16–84 (GSLQHRLRQM…GRSGTFVSAA (69 aa)). Positions 44–63 (TRALAAHLGVARITVTLAYA) form a DNA-binding region, H-T-H motif. K330 is modified (N6-(pyridoxal phosphate)lysine).

In the C-terminal section; belongs to the class-I pyridoxal-phosphate-dependent aminotransferase family. The cofactor is pyridoxal 5'-phosphate.

Functionally, transcriptional activator, which is essential for taurine-dependent expression of the tpa-tauR-xsc operon. Acts by binding to direct repeats in the promoter region. The polypeptide is HTH-type transcriptional regulator TauR (Rhodobacter capsulatus (strain ATCC BAA-309 / NBRC 16581 / SB1003)).